We begin with the raw amino-acid sequence, 321 residues long: Phospho-N-acetylmuramoyl-pentapeptide-transferase (321 aa).

A run of 10 helical transmembrane segments spans residues 1 to 21, 50 to 70, 76 to 96, 112 to 132, 140 to 160, 176 to 196, 200 to 220, 225 to 245, 250 to 270, and 300 to 320; these read MLFI…PILI, MGGL…IFFV, IILL…DDYI, FLAQ…FHLV, IPFT…IVFW, GLAT…SFVL, AIGA…PYNL, VFMG…ISIM, LSLL…MLQV, and VVTV…WIGV.

It belongs to the glycosyltransferase 4 family. MraY subfamily. The cofactor is Mg(2+).

It is found in the cell membrane. The enzyme catalyses UDP-N-acetyl-alpha-D-muramoyl-L-alanyl-gamma-D-glutamyl-L-lysyl-D-alanyl-D-alanine + di-trans,octa-cis-undecaprenyl phosphate = Mur2Ac(oyl-L-Ala-gamma-D-Glu-L-Lys-D-Ala-D-Ala)-di-trans,octa-cis-undecaprenyl diphosphate + UMP. Its pathway is cell wall biogenesis; peptidoglycan biosynthesis. Catalyzes the initial step of the lipid cycle reactions in the biosynthesis of the cell wall peptidoglycan: transfers peptidoglycan precursor phospho-MurNAc-pentapeptide from UDP-MurNAc-pentapeptide onto the lipid carrier undecaprenyl phosphate, yielding undecaprenyl-pyrophosphoryl-MurNAc-pentapeptide, known as lipid I. The sequence is that of Phospho-N-acetylmuramoyl-pentapeptide-transferase from Staphylococcus haemolyticus (strain JCSC1435).